The chain runs to 174 residues: Variant surface antigen F (174 aa).

Positions 1-29 (MKKSIFSKKLLFSFGSLVALAAIPLITIS) are cleaved as a signal peptide. Cys30 is lipidated: N-palmitoyl cysteine. Cys30 is lipidated: S-diacylglycerol cysteine. The tract at residues 32 to 174 (QTNTDQSQQP…PEQGNSQVSK (143 aa)) is disordered. A compositionally biased stretch (gly residues) spans 43 to 53 (SGSGSGSGTSN). A run of 9 repeats spans residues 55 to 67 (SGST…GNNQ), 68 to 80 (GGST…GNNQ), 81 to 93 (GGST…GNNQ), 94 to 106 (GGST…GNNQ), 107 to 119 (GGST…GNNQ), 120 to 132 (GGST…GNNQ), 133 to 145 (GGST…GNNQ), 146 to 158 (GGST…GNNQ), and 159 to 171 (GGST…GNSQ). Residues 55–171 (SGSTPTPEQG…TPTPEQGNSQ (117 aa)) are 9 X 13 AA tandem repeats. The span at 62-174 (EQGNNQGGST…PEQGNSQVSK (113 aa)) shows a compositional bias: polar residues.

Its subcellular location is the cell membrane. Functionally, responsible for the antigenic diversity for host adaptation. Expression in E.coli of a construct containing vlpD, vlpE, and vlpF yields antigenically distinguishable products corresponding to each gene. The polypeptide is Variant surface antigen F (vlpF) (Mesomycoplasma hyorhinis (Mycoplasma hyorhinis)).